We begin with the raw amino-acid sequence, 241 residues long: Caffeoyl-CoA O-methyltransferase (241 aa).

Blocked amino end (Met) is present on M1. K15 is a binding site for substrate. S-adenosyl-L-methionine-binding positions include T57, E79, 81 to 82 (GV), S87, D105, and A134. A substrate-binding site is contributed by D157. D157 is a binding site for a divalent metal cation. D159 provides a ligand contact to S-adenosyl-L-methionine. The a divalent metal cation site is built by D183 and N184. Residue N188 participates in substrate binding.

Belongs to the class I-like SAM-binding methyltransferase superfamily. Cation-dependent O-methyltransferase family. CCoAMT subfamily. In terms of assembly, homodimer. The cofactor is a divalent metal cation. Roots and leaves.

The enzyme catalyses (E)-caffeoyl-CoA + S-adenosyl-L-methionine = (E)-feruloyl-CoA + S-adenosyl-L-homocysteine + H(+). Its pathway is aromatic compound metabolism; phenylpropanoid biosynthesis. Methylates caffeoyl-CoA to feruloyl-CoA and 5-hydroxyferuloyl-CoA to sinapoyl-CoA. Plays a role in the synthesis of feruloylated polysaccharides. Involved in the reinforcement of the plant cell wall. Also involved in the responding to wounding or pathogen challenge by the increased formation of cell wall-bound ferulic acid polymers. The chain is Caffeoyl-CoA O-methyltransferase from Petroselinum crispum (Parsley).